The following is a 364-amino-acid chain: Sulfate/thiosulfate import ATP-binding protein CysA (364 aa).

Residues 3–237 enclose the ABC transporter domain; it reads IEIARIKKSF…PATRFVLEFM (235 aa). Residue 35–42 participates in ATP binding; that stretch reads GPSGSGKT.

This sequence belongs to the ABC transporter superfamily. Sulfate/tungstate importer (TC 3.A.1.6) family. The complex is composed of two ATP-binding proteins (CysA), two transmembrane proteins (CysT and CysW) and a solute-binding protein (CysP).

Its subcellular location is the cell inner membrane. The enzyme catalyses sulfate(out) + ATP + H2O = sulfate(in) + ADP + phosphate + H(+). It catalyses the reaction thiosulfate(out) + ATP + H2O = thiosulfate(in) + ADP + phosphate + H(+). Functionally, part of the ABC transporter complex CysAWTP involved in sulfate/thiosulfate import. Responsible for energy coupling to the transport system. This Salmonella typhi protein is Sulfate/thiosulfate import ATP-binding protein CysA.